A 129-amino-acid chain; its full sequence is Glycophorin-A (129 aa).

Positions 1-17 are cleaved as a signal peptide; the sequence is MYEKIVIVLLLSGYIST. Pyrrolidone carboxylic acid is present on Gln18. Over 18–82 the chain is Extracellular; the sequence is QDVTEIIPHE…QLVHIFSEPV (65 aa). Residues Ser29 and Ser30 are each glycosylated (O-linked (GalNAc...) serine). O-linked (GalNAc...) threonine glycosylation is present at Thr34. An O-linked (GalNAc...) serine glycan is attached at Ser40. 2 O-linked (GalNAc...) threonine glycosylation sites follow: Thr41 and Thr48. A glycan (O-linked (GalNAc...) serine) is linked at Ser56. A helical membrane pass occupies residues 83–103; it reads IIGIIYAVMLGIIITILSIAF. The Cytoplasmic segment spans residues 104 to 129; that stretch reads CIGQLTKKSSLPAQVASPEDVDPEVL.

This sequence belongs to the glycophorin-A family. In terms of assembly, homodimer. Component of the ankyrin-1 complex in the erythrocyte, composed of ANK1, RHCE, RHAG, SLC4A1, EPB42, GYPA, GYPB and AQP1. Interacts with SLC4A1; a GYPA monomer is bound at each end of the SLC4A1 dimer forming a heterotetramer.

It localises to the membrane. Its function is as follows. Component of the ankyrin-1 complex, a multiprotein complex involved in the stability and shape of the erythrocyte membrane. Glycophorin A is the major intrinsic membrane protein of the erythrocyte. The N-terminal glycosylated segment, which lies outside the erythrocyte membrane, has MN blood group receptors. Appears to be important for the function of SLC4A1 and is required for high activity of SLC4A1. May be involved in translocation of SLC4A1 to the plasma membrane. This is Glycophorin-A from Canis lupus familiaris (Dog).